Reading from the N-terminus, the 439-residue chain is Histidine--tRNA ligase (439 aa).

The protein belongs to the class-II aminoacyl-tRNA synthetase family. In terms of assembly, homodimer.

The protein localises to the cytoplasm. The enzyme catalyses tRNA(His) + L-histidine + ATP = L-histidyl-tRNA(His) + AMP + diphosphate + H(+). The sequence is that of Histidine--tRNA ligase from Leptospira borgpetersenii serovar Hardjo-bovis (strain L550).